Reading from the N-terminus, the 276-residue chain is CTD small phosphatase-like protein (276 aa).

The interval Met1 to Asn31 is disordered. The region spanning Leu102–Leu260 is the FCP1 homology domain. Asp112 acts as the 4-aspartylphosphate intermediate in catalysis. 3 residues coordinate Mg(2+): Asp112, Asp114, and Asn223. Catalysis depends on Asp114, which acts as the Proton donor.

As to quaternary structure, monomer. Interacts with REST. Mg(2+) is required as a cofactor.

The protein localises to the nucleus. It carries out the reaction O-phospho-L-seryl-[protein] + H2O = L-seryl-[protein] + phosphate. The enzyme catalyses O-phospho-L-threonyl-[protein] + H2O = L-threonyl-[protein] + phosphate. Its function is as follows. Preferentially catalyzes the dephosphorylation of 'Ser-5' within the tandem 7 residue repeats in the C-terminal domain (CTD) of the largest RNA polymerase II subunit POLR2A. Negatively regulates RNA polymerase II transcription, possibly by controlling the transition from initiation/capping to processive transcript elongation. Recruited by REST to neuronal genes that contain RE-1 elements, leading to neuronal gene silencing in non-neuronal cells. This chain is CTD small phosphatase-like protein (Ctdspl), found in Mus musculus (Mouse).